Consider the following 252-residue polypeptide: ATP synthase subunit a, chloroplastic (252 aa).

A run of 5 helical transmembrane segments spans residues 41 to 61 (GQVLITSWIVLGGVIIFTLLA), 100 to 120 (VPFLGTIFIFVFVSNWAGALL), 138 to 158 (DINTTVSLALLTSVSYFYAGI), 204 to 224 (LIVGVLVALVPLFVPIPLMLL), and 225 to 245 (GVFTSAIQALVFATLAGAYIG).

This sequence belongs to the ATPase A chain family. As to quaternary structure, F-type ATPases have 2 components, CF(1) - the catalytic core - and CF(0) - the membrane proton channel. CF(1) has five subunits: alpha(3), beta(3), gamma(1), delta(1), epsilon(1). CF(0) has four main subunits: a, b, b' and c.

The protein localises to the plastid. It localises to the chloroplast thylakoid membrane. Key component of the proton channel; it plays a direct role in the translocation of protons across the membrane. The sequence is that of ATP synthase subunit a, chloroplastic from Oedogonium cardiacum (Filamentous green alga).